A 408-amino-acid polypeptide reads, in one-letter code: Aurora kinase A-B (408 aa).

Residues 1–10 (MERAVKENHK) show a composition bias toward basic and acidic residues. Residues 1–128 (MERAVKENHK…QGKTLAVPKE (128 aa)) form a disordered region. The span at 85–110 (GHQTSKPQGPNENRNPQQTSHSSTPN) shows a compositional bias: polar residues. In terms of domain architecture, Protein kinase spans 140 to 390 (FEIGRPLGKG…LKGVLEHPWI (251 aa)). Residues Lys150, Lys169, and 217-220 (LDYA) each bind ATP. Catalysis depends on Asp263, which acts as the Proton acceptor. Position 281 (Asp281) interacts with ATP. An activation segment region spans residues 287-300 (HAPSSRRTTLCGTL).

Belongs to the protein kinase superfamily. Ser/Thr protein kinase family. Aurora subfamily. Interacts with kif2c and kif11. Post-translationally, phosphorylated. Autophosphorylated on a serine residue.

Its subcellular location is the cytoplasm. The protein resides in the cytoskeleton. The protein localises to the spindle pole. It is found in the microtubule organizing center. It localises to the centrosome. The catalysed reaction is L-seryl-[protein] + ATP = O-phospho-L-seryl-[protein] + ADP + H(+). It carries out the reaction L-threonyl-[protein] + ATP = O-phospho-L-threonyl-[protein] + ADP + H(+). Functionally, mitotic serine/threonine kinases that contributes to the regulation of cell cycle progression. Associates with the centrosome and the spindle microtubules during mitosis and plays a critical role in various mitotic events including the establishment of mitotic spindle, centrosome duplication, centrosome separation as well as maturation, chromosomal alignment, spindle assembly checkpoint, and cytokinesis. Phosphorylates numerous target proteins. Important for microtubule formation and/or stabilization. This Xenopus laevis (African clawed frog) protein is Aurora kinase A-B (aurka-b).